A 60-amino-acid polypeptide reads, in one-letter code: KLVALIPNDQLRSILKAVVHKVAKTQFGCPAYEGYCNDHCNDIERKDGECHGFKCKCAKD.

In terms of domain architecture, BetaSPN-type CS-alpha/beta spans Q26 to D60. Intrachain disulfides connect C29–C50, C36–C55, and C40–C57.

This sequence belongs to the long chain scorpion toxin family. Class 1 subfamily. In terms of tissue distribution, expressed by the venom gland.

It localises to the secreted. Inhibits voltage-gated potassium channels Kv1.1/KCNA1, Kv1.2/KCNA2, and Kv1.3/KCNA3. In terms of biological role, does not induce hemolytic activity, lactate dehydrogenase (LDH) release from mast cells, mast cell degranulation, and antimicrobial effects. In vivo, injection into mice causes moderate edema formation, but induces very weak or no change in nociceptive sensibility. It also reduces mice locomotion, suggesting an increase in anxiety, but causes no alteration in rearing (standing on hind limbs). This is Potassium channel toxin Tst-beta-KTx from Tityus stigmurus (Brazilian scorpion).